Consider the following 236-residue polypeptide: MQQSTNVDPQEIAKFERMAETWWDLNGEFKPLHLLNPLRLNYIDQTAGGIFGKKVLDVGCGGGILSESMARIGAVVDGLDMGEEPLEVARLHALETGVSINYVKNTAEAHREDHREYYDVVTCMEMLEHVPDPQSVIQACCDMVKPGGFVFFSTINRNIKSFVETIIGAEYLLKMLPIGTHDHNKFIKPSELMALVDNTDLLCKDALGITYNPLTGIFKYTPKVDVNYMIATQKVD.

The S-adenosyl-L-methionine site is built by Arg-39, Gly-59, Asp-80, and Met-124.

This sequence belongs to the methyltransferase superfamily. UbiG/COQ3 family.

It carries out the reaction a 3-demethylubiquinol + S-adenosyl-L-methionine = a ubiquinol + S-adenosyl-L-homocysteine + H(+). The catalysed reaction is a 3-(all-trans-polyprenyl)benzene-1,2-diol + S-adenosyl-L-methionine = a 2-methoxy-6-(all-trans-polyprenyl)phenol + S-adenosyl-L-homocysteine + H(+). It participates in cofactor biosynthesis; ubiquinone biosynthesis. In terms of biological role, O-methyltransferase that catalyzes the 2 O-methylation steps in the ubiquinone biosynthetic pathway. The sequence is that of Ubiquinone biosynthesis O-methyltransferase from Shewanella sp. (strain MR-4).